Here is a 365-residue protein sequence, read N- to C-terminus: tRNA/tmRNA (uracil-C(5))-methyltransferase (365 aa).

Gln189, Tyr217, Asn222, Glu238, and Asp298 together coordinate S-adenosyl-L-methionine. Cys323 (nucleophile) is an active-site residue. The active-site Proton acceptor is the Glu357.

This sequence belongs to the class I-like SAM-binding methyltransferase superfamily. RNA M5U methyltransferase family. TrmA subfamily.

It catalyses the reaction uridine(54) in tRNA + S-adenosyl-L-methionine = 5-methyluridine(54) in tRNA + S-adenosyl-L-homocysteine + H(+). It carries out the reaction uridine(341) in tmRNA + S-adenosyl-L-methionine = 5-methyluridine(341) in tmRNA + S-adenosyl-L-homocysteine + H(+). Functionally, dual-specificity methyltransferase that catalyzes the formation of 5-methyluridine at position 54 (m5U54) in all tRNAs, and that of position 341 (m5U341) in tmRNA (transfer-mRNA). The polypeptide is tRNA/tmRNA (uracil-C(5))-methyltransferase (Shewanella baltica (strain OS185)).